Here is a 278-residue protein sequence, read N- to C-terminus: 4-diphosphocytidyl-2-C-methyl-D-erythritol kinase (278 aa).

The active site involves Lys9. 89 to 99 (PVASGIGGGSA) contacts ATP. Asp128 is a catalytic residue.

The protein belongs to the GHMP kinase family. IspE subfamily.

It catalyses the reaction 4-CDP-2-C-methyl-D-erythritol + ATP = 4-CDP-2-C-methyl-D-erythritol 2-phosphate + ADP + H(+). It participates in isoprenoid biosynthesis; isopentenyl diphosphate biosynthesis via DXP pathway; isopentenyl diphosphate from 1-deoxy-D-xylulose 5-phosphate: step 3/6. In terms of biological role, catalyzes the phosphorylation of the position 2 hydroxy group of 4-diphosphocytidyl-2C-methyl-D-erythritol. This chain is 4-diphosphocytidyl-2-C-methyl-D-erythritol kinase, found in Cereibacter sphaeroides (strain ATCC 17029 / ATH 2.4.9) (Rhodobacter sphaeroides).